A 429-amino-acid polypeptide reads, in one-letter code: SET domain-containing protein 14 (429 aa).

Positions 26, 29, 39, 42, 48, 52, 60, and 64 each coordinate Zn(2+). Residues 26-64 (CNQCLTSMAELKKCSACRRLAYCSQECQRADWKLHKVEC) form an MYND-type zinc finger.

It localises to the nucleus. This Caenorhabditis elegans protein is SET domain-containing protein 14 (set-14).